An 853-amino-acid polypeptide reads, in one-letter code: MAVTSHHMIPVMVVLMSACLATAGPEPSTRCELSPINASHPVQALMESFTVLSGCASRGTTGLPREVHVLNLRSTDQGPGQRQREVTLHLNPIASVHTHHKPIVFLLNSPQPLVWHLKTERLAAGVPRLFLVSEGSVVQFPSGNFSLTAETEERNFPQENEHLLRWAQKEYGAVTSFTELKIARNIYIKVGEDQVFPPTCNIGKNFLSLNYLAEYLQPKAAEGCVLPSQPHEKEVHIIELITPSSNPYSAFQVDIIVDIRPAQEDPEVVKNLVLILKCKKSVNWVIKSFDVKGNLKVIAPNSIGFGKESERSMTMTKLVRDDIPSTQENLMKWALDNGYRPVTSYTMAPVANRFHLRLENNEEMRDEEVHTIPPELRILLDPDHPPALDNPLFPGEGSPNGGLPFPFPDIPRRGWKEGEDRIPRPKQPIVPSVQLLPDHREPEEVQGGVDIALSVKCDHEKMVVAVDKDSFQTNGYSGMELTLLDPSCKAKMNGTHFVLESPLNGCGTRHRRSTPDGVVYYNSIVVQAPSPGDSSGWPDGYEDLESGDNGFPGDGDEGETAPLSRAGVVVFNCSLRQLRNPSGFQGQLDGNATFNMELYNTDLFLVPSPGVFSVAENEHVYVEVSVTKADQDLGFAIQTCFLSPYSNPDRMSDYTIIENICPKDDSVKFYSSKRVHFPIPHAEVDKKRFSFLFKSVFNTSLLFLHCELTLCSRKKGSLKLPRCVTPDDACTSLDATMIWTMMQNKKTFTKPLAVVLQVDYKENVPSTKDSSPIPPPPPQIFHGLDTLTVMGIAFAAFVIGALLTGALWYIYSHTGETARRQQVPTSPPASENSSAAHSIGSTQSTPCSSSSTA.

A signal peptide spans Met1–Ala23. Topologically, residues Gly24 to Val789 are extracellular. N-linked (GlcNAc...) asparagine glycosylation is found at Asn37, Asn144, and Asn493. Cys55 and Cys200 form a disulfide bridge. The 275-residue stretch at Lys456–Cys730 folds into the ZP domain. Positions Ser530–Glu559 are disordered. O-linked (Xyl...) (glycosaminoglycan) serine glycans are attached at residues Ser535 and Ser546. N-linked (GlcNAc...) asparagine glycans are attached at residues Asn572, Asn591, and Asn698. 3 cysteine pairs are disulfide-bonded: Cys640–Cys706, Cys661–Cys730, and Cys711–Cys723. The interval Met737–Pro751 is interaction with TGF-beta ligand. A helical transmembrane segment spans residues Met790 to Tyr811. Over Ser812–Ala853 the chain is Cytoplasmic. Positions Arg820–Ala836 are enriched in polar residues. The disordered stretch occupies residues Arg820–Ala853. Residues Ser838–Ala853 are compositionally biased toward low complexity. Phosphothreonine is present on Thr842.

In terms of assembly, forms homodimers and homooligomers. Interacts with DYNLT4. Interacts with integrin ITGA5:ITGB1; this interaction promotes the internalization and trafficking of ITGA5:ITGB1 into endocytic vesicles. Interacts with TGFB1, BMP2, BMP5, BMP7 or GDF5 and inhibin A via the ligand binding domains. Interacts with ALK3/BMPR1A; this interaction results in the cell surface retention of BMPR1A. Interacts with ALK6/BMPR1B; this interaction enhances BMPR1B-mediated stimulation of the BMP signaling pathway. Interacts with the scaffolding protein beta-arrestin2/ARRB2; this interaction mediates internalization of TGFBR3 and thus regulates migration, actin cytoskeleton and activation of CDC42. Extensively modified by glycosaminoglycan groups (GAG). In terms of processing, phosphorylated in the cytoplasmic domain by the type II receptor TGFBR2 at THR-842 to mediate recruitment of ARRB2 and subsequent internalization of TGFBR2 and TGFBR3.

It localises to the cell membrane. The protein localises to the secreted. The protein resides in the extracellular space. Its subcellular location is the extracellular matrix. Cell surface receptor that regulates diverse cellular processes including cell proliferation, differentiation, migration, and apoptosis. Initiates BMP, inhibin, and TGF-beta signaling pathways by interacting with different ligands including TGFB1, BMP2, BMP5, BMP7 or GDF5. Alternatively, acts as a cell surface coreceptor for BMP ligands, serving to enhance ligand binding by differentially regulating BMPR1A/ALK3 and BMPR1B/ALK6 receptor trafficking. Promotes epithelial cell adhesion, focal adhesion formation and integrin signaling during epithelial cell spreading on fibronectin. By interacting with the scaffolding protein beta-arrestin2/ARRB2, regulates migration or actin cytoskeleton and promotes the activation of CDC42 as well as the inhibition of NF-kappa-B. In gonadotrope cells, acts as an inhibin A coreceptor and regulates follicle-stimulating hormone (FSH) levels and female fertility. Plays a role in the inhibition of directed and random cell migration in epithelial cells by altering the actin cytoskeletal organization. Participates in epithelial-mesenchymal transformation (EMT) upon binding to BMP2 or TGFB2, by activating the PAR6/SMURF1/RHOA pathway. The sequence is that of Transforming growth factor beta receptor type 3 (Tgfbr3) from Rattus norvegicus (Rat).